The sequence spans 369 residues: Leucine carboxyl methyltransferase 1 (369 aa).

Residues arginine 84, glycine 108, aspartate 132, 187–188, and glutamate 215 contribute to the S-adenosyl-L-methionine site; that span reads DL.

Belongs to the methyltransferase superfamily. LCMT family.

It catalyses the reaction [phosphatase 2A protein]-C-terminal L-leucine + S-adenosyl-L-methionine = [phosphatase 2A protein]-C-terminal L-leucine methyl ester + S-adenosyl-L-homocysteine. Its function is as follows. Methylates the carboxyl group of the C-terminal leucine residue of protein phosphatase 2A catalytic subunits to form alpha-leucine ester residues. The protein is Leucine carboxyl methyltransferase 1 (PPM1) of Debaryomyces hansenii (strain ATCC 36239 / CBS 767 / BCRC 21394 / JCM 1990 / NBRC 0083 / IGC 2968) (Yeast).